A 364-amino-acid polypeptide reads, in one-letter code: Fructose-bisphosphate aldolase A (364 aa).

Residue T9 is modified to Phosphothreonine. S36 and S39 each carry phosphoserine. Position 42 is an N6-acetyllysine; alternate (K42). K42 is covalently cross-linked (Glycyl lysine isopeptide (Lys-Gly) (interchain with G-Cter in SUMO1); alternate). Residue K42 forms a Glycyl lysine isopeptide (Lys-Gly) (interchain with G-Cter in SUMO2); alternate linkage. R43 is a binding site for beta-D-fructose 1,6-bisphosphate. Phosphoserine is present on S46. Residue K99 is modified to N6-(2-hydroxyisobutyryl)lysine. K108 is modified (N6-acetyllysine). Residue K111 is modified to N6-acetyllysine; alternate. K111 bears the N6-malonyllysine; alternate mark. Position 132 is a phosphoserine (S132). At K147 the chain carries N6-(2-hydroxyisobutyryl)lysine. The active-site Proton acceptor is the E188. K230 acts as the Schiff-base intermediate with dihydroxyacetone-P in catalysis. S272 carries the phosphoserine modification. Residues S272–G274, S301, and R304 each bind beta-D-fructose 1,6-bisphosphate. The residue at position 312 (K312) is an N6-malonyllysine. K330 is subject to N6-acetyllysine. Residue N361 is modified to Deamidated asparagine; in form beta.

Belongs to the class I fructose-bisphosphate aldolase family. In terms of assembly, homotetramer. Interacts with SNX9 and WAS. Interacts with FBP2; the interaction blocks FBP2 inhibition by physiological concentrations of AMP and reduces inhibition by Ca(2+). Post-translationally, asn-361 in form alpha is deaminated to Asp in form beta.

It localises to the cytoplasm. It is found in the myofibril. The protein localises to the sarcomere. The protein resides in the i band. Its subcellular location is the m line. It catalyses the reaction beta-D-fructose 1,6-bisphosphate = D-glyceraldehyde 3-phosphate + dihydroxyacetone phosphate. Its pathway is carbohydrate degradation; glycolysis; D-glyceraldehyde 3-phosphate and glycerone phosphate from D-glucose: step 4/4. Its function is as follows. Plays a key role in glycolysis and gluconeogenesis. In addition, may also function as scaffolding protein. The chain is Fructose-bisphosphate aldolase A (ALDOA) from Oryctolagus cuniculus (Rabbit).